Here is a 504-residue protein sequence, read N- to C-terminus: Anaerobic nitric oxide reductase transcription regulator NorR (504 aa).

Aspartate 57 carries the 4-aspartylphosphate modification. Positions 187–416 constitute a Sigma-54 factor interaction domain; sequence MIGLSPGMTQ…LEHAIHRAVV (230 aa). ATP contacts are provided by residues 215 to 222 and 278 to 287; these read GETGTGKE and ADNGTLFLDE. The segment at residues 479–498 is a DNA-binding region (H-T-H motif); it reads WAACARMLETDVANLHRLAK.

It participates in nitrogen metabolism; nitric oxide reduction. Its function is as follows. Required for the expression of anaerobic nitric oxide (NO) reductase, acts as a transcriptional activator for at least the norVW operon. Activation also requires sigma-54. The protein is Anaerobic nitric oxide reductase transcription regulator NorR of Escherichia coli O9:H4 (strain HS).